The following is a 786-amino-acid chain: Endonuclease MutS2 (786 aa).

335 to 342 (GPNTGGKT) provides a ligand contact to ATP. The Smr domain occupies 711–786 (LDLRGERFEN…GLGVTVVELK (76 aa)).

It belongs to the DNA mismatch repair MutS family. MutS2 subfamily. Homodimer. Binds to stalled ribosomes, contacting rRNA.

Endonuclease that is involved in the suppression of homologous recombination and thus may have a key role in the control of bacterial genetic diversity. Functionally, acts as a ribosome collision sensor, splitting the ribosome into its 2 subunits. Detects stalled/collided 70S ribosomes which it binds and splits by an ATP-hydrolysis driven conformational change. Acts upstream of the ribosome quality control system (RQC), a ribosome-associated complex that mediates the extraction of incompletely synthesized nascent chains from stalled ribosomes and their subsequent degradation. Probably generates substrates for RQC. This Bacillus cereus (strain Q1) protein is Endonuclease MutS2.